Consider the following 600-residue polypeptide: UvrABC system protein C (600 aa).

In terms of domain architecture, GIY-YIG spans 15–92 (DKPGCYLMKD…IKKYQPYYNV (78 aa)). One can recognise a UVR domain in the interval 197–232 (SQVKQDLTEKMTQASMNLEFERAAEFRDQLKYIEQT).

Belongs to the UvrC family. Interacts with UvrB in an incision complex.

It is found in the cytoplasm. Functionally, the UvrABC repair system catalyzes the recognition and processing of DNA lesions. UvrC both incises the 5' and 3' sides of the lesion. The N-terminal half is responsible for the 3' incision and the C-terminal half is responsible for the 5' incision. This chain is UvrABC system protein C, found in Lactobacillus gasseri (strain ATCC 33323 / DSM 20243 / BCRC 14619 / CIP 102991 / JCM 1131 / KCTC 3163 / NCIMB 11718 / NCTC 13722 / AM63).